Here is a 446-residue protein sequence, read N- to C-terminus: Exodeoxyribonuclease 7 large subunit (446 aa).

This sequence belongs to the XseA family. As to quaternary structure, heterooligomer composed of large and small subunits.

It is found in the cytoplasm. The catalysed reaction is Exonucleolytic cleavage in either 5'- to 3'- or 3'- to 5'-direction to yield nucleoside 5'-phosphates.. In terms of biological role, bidirectionally degrades single-stranded DNA into large acid-insoluble oligonucleotides, which are then degraded further into small acid-soluble oligonucleotides. In Xanthomonas campestris pv. campestris (strain 8004), this protein is Exodeoxyribonuclease 7 large subunit.